Consider the following 902-residue polypeptide: 4-hydroxyphenylacetate decarboxylase glycyl radical subunit (902 aa).

In terms of domain architecture, PFL spans 38–774 (KRAEDLLDVY…ATLATPDGRL (737 aa)). Positions 348 and 507 each coordinate 4-hydroxyphenylacetate. The Cysteine radical intermediate role is filled by Cys-507. The active-site Proton donor is the Glu-509. His-540 and Glu-641 together coordinate 4-hydroxyphenylacetate. A Glycine radical domain is found at 782–902 (GSVSAYAGTD…VIARTEYEGV (121 aa)). A Glycine radical modification is found at Gly-877.

It belongs to the glycyl radical enzyme (GRE) family. HPAD subfamily. Heterooctamer consisting of 4 large (HpdB) subunits and 4 small (HpdC) subunits. Also forms a catalytically inactive homodimer. In terms of processing, phosphorylated on serine. Phosphorylation may trigger the formation of the active heterooctamers and thereby regulates enzyme activity. Post-translationally, requires the activating protein HpdA to generate the key active site glycyl radical that is involved in catalysis.

It catalyses the reaction 4-hydroxyphenylacetate + H(+) = 4-methylphenol + CO2. It carries out the reaction 3,4-dihydroxyphenylacetate + H(+) = 4-methylcatechol + CO2. The catalysed reaction is 2-hydroxy-2-(4-hydroxyphenyl)acetate + H(+) = 4-hydroxybenzyl alcohol + CO2. With respect to regulation, enzyme activity catalyzed by the HPA decarboxylase complex is rapidly and irreversibly inactivated by oxygen. Competitively inhibited by p-hydroxyphenylacetamide. Not inhibited by m- or o-hydroxyphenyl-acetate, p-hydroxybenzoate or p-hydroxyphenylpropionate. Functionally, glycyl radical subunit of the HPA decarboxylase that decarboxylates phenylacetates with a hydroxyl group in the p-position. Active toward 4-hydroxyphenylacetate, 3,4-dihydroxyphenylacetate and to a lesser extent p-hydroxymandelate (2-hydroxy-2-(4-hydroxyphenyl)acetate), forming 4-methylphenol, 4-methylcatechol and 4-hydroxybenzylalcohol, respectively. Is likely involved in the catabolism of aromatic amino acids such as tyrosine fermentation. 4-methylphenol (p-cresol) formation provides metabolic toxicity, which may benefit the pathogen C.difficile by suppression of the endogenous gastrointestinal microflora, allowing the development of gastrointestinal infections. The large subunit is the catalytic subunit that binds the substrate. The chain is 4-hydroxyphenylacetate decarboxylase glycyl radical subunit from Clostridioides difficile (Peptoclostridium difficile).